The primary structure comprises 586 residues: Kelch-like protein 7 (586 aa).

The 68-residue stretch at 44 to 111 (CDVILMVQER…AYTARISVNS (68 aa)) folds into the BTB domain. In terms of domain architecture, BACK spans 146 to 248 (CLGISVLAEC…SKNFLSKTVQ (103 aa)). 6 Kelch repeats span residues 294–336 (RIAL…FWDN), 337–382 (VVYI…AAEG), 383–430 (KIYT…EANG), 431–481 (LIYV…FVKD), 483–528 (IFAV…AVGS), and 530–575 (IYVL…CVVD).

As to quaternary structure, homodimer. Component of the BCR(KLHL7) E3 ubiquitin ligase complex, at least composed of CUL3 and KLHL7 and RBX1.

The protein resides in the nucleus. It is found in the cytoplasm. It functions in the pathway protein modification; protein ubiquitination. Its function is as follows. Substrate-specific adapter of a BCR (BTB-CUL3-RBX1) E3 ubiquitin ligase complex. The BCR(KLHL7) complex acts by mediating ubiquitination and subsequent degradation of substrate proteins. Probably mediates 'Lys-48'-linked ubiquitination. The polypeptide is Kelch-like protein 7 (Klhl7) (Rattus norvegicus (Rat)).